We begin with the raw amino-acid sequence, 442 residues long: Serine hydroxymethyltransferase (442 aa).

Pyridoxal 5'-phosphate contacts are provided by residues Y54, 100–102 (SGS), and H236. The cysteines at positions 125 and 364 are disulfide-linked. An N6-(pyridoxal phosphate)lysine modification is found at K237. A pyridoxal 5'-phosphate-binding site is contributed by G272.

Belongs to the SHMT family. In terms of assembly, homodimer. It depends on pyridoxal 5'-phosphate as a cofactor.

The protein localises to the cytoplasm. The protein resides in the mitochondrion matrix. Its subcellular location is the plastid. It localises to the apicoplast. It is found in the nucleus. It carries out the reaction (6R)-5,10-methylene-5,6,7,8-tetrahydrofolate + glycine + H2O = (6S)-5,6,7,8-tetrahydrofolate + L-serine. It functions in the pathway one-carbon metabolism; tetrahydrofolate interconversion. With respect to regulation, redox regulation; active in reducing conditions, inactive in oxidizing conditions. The reduction of the cysteine pairs allows the access binding of the tetrahydrofolate substrate to its binding site. This mechanism appears to be unique to Plasmodium species. In terms of biological role, catalyzes the interconversion of serine to glycine accompanied with the production of 5,10-methylenetetrahydrofolate, a source of one-carbon units used by thymidylate synthase to convert dUMP to dTMP for DNA synthesis. Binds to its own mRNA and to the mRNA of bifunctional dihydrofolate reductase-thymidylate synthase (DHFR-TS) in vitro; the physiological relevance of this interaction is not clear. This chain is Serine hydroxymethyltransferase, found in Plasmodium falciparum (isolate 3D7).